A 334-amino-acid chain; its full sequence is Holliday junction branch migration complex subunit RuvB (334 aa).

The large ATPase domain (RuvB-L) stretch occupies residues 4-184 (ADRLIQPQIQ…FGIPLRLEFY (181 aa)). ATP contacts are provided by residues Arg24, Gly65, Lys68, Thr69, Thr70, 131–133 (EDY), Arg174, Tyr184, and Arg221. Thr69 provides a ligand contact to Mg(2+). The interval 185–255 (NIKDLSTIVT…VAEHALDLLD (71 aa)) is small ATPAse domain (RuvB-S). The interval 258 to 334 (SEGFDYMDRK…YQHFELIKPE (77 aa)) is head domain (RuvB-H). DNA-binding residues include Arg294, Arg313, and Arg318.

The protein belongs to the RuvB family. In terms of assembly, homohexamer. Forms an RuvA(8)-RuvB(12)-Holliday junction (HJ) complex. HJ DNA is sandwiched between 2 RuvA tetramers; dsDNA enters through RuvA and exits via RuvB. An RuvB hexamer assembles on each DNA strand where it exits the tetramer. Each RuvB hexamer is contacted by two RuvA subunits (via domain III) on 2 adjacent RuvB subunits; this complex drives branch migration. In the full resolvosome a probable DNA-RuvA(4)-RuvB(12)-RuvC(2) complex forms which resolves the HJ.

The protein localises to the cytoplasm. It carries out the reaction ATP + H2O = ADP + phosphate + H(+). Functionally, the RuvA-RuvB-RuvC complex processes Holliday junction (HJ) DNA during genetic recombination and DNA repair, while the RuvA-RuvB complex plays an important role in the rescue of blocked DNA replication forks via replication fork reversal (RFR). RuvA specifically binds to HJ cruciform DNA, conferring on it an open structure. The RuvB hexamer acts as an ATP-dependent pump, pulling dsDNA into and through the RuvAB complex. RuvB forms 2 homohexamers on either side of HJ DNA bound by 1 or 2 RuvA tetramers; 4 subunits per hexamer contact DNA at a time. Coordinated motions by a converter formed by DNA-disengaged RuvB subunits stimulates ATP hydrolysis and nucleotide exchange. Immobilization of the converter enables RuvB to convert the ATP-contained energy into a lever motion, pulling 2 nucleotides of DNA out of the RuvA tetramer per ATP hydrolyzed, thus driving DNA branch migration. The RuvB motors rotate together with the DNA substrate, which together with the progressing nucleotide cycle form the mechanistic basis for DNA recombination by continuous HJ branch migration. Branch migration allows RuvC to scan DNA until it finds its consensus sequence, where it cleaves and resolves cruciform DNA. The polypeptide is Holliday junction branch migration complex subunit RuvB (Shewanella baltica (strain OS155 / ATCC BAA-1091)).